The primary structure comprises 443 residues: L-ornithine N(5)-monooxygenase (443 aa).

FAD-binding positions include 45–53 (DKQGDYRWH) and glutamine 64. Position 69 (lysine 69) interacts with substrate. An FAD-binding site is contributed by valine 130. NADP(+) is bound by residues 215–218 (GGQS) and arginine 240. Residues 254–257 (NEVF) and asparagine 284 each bind substrate. 284-286 (NYS) contacts NADP(+). 407-409 (TLL) lines the FAD pocket. Serine 410 contacts substrate.

Belongs to the lysine N(6)-hydroxylase/L-ornithine N(5)-oxygenase family. In terms of assembly, homotetramer. FAD serves as cofactor.

The protein resides in the cell inner membrane. The enzyme catalyses L-ornithine + NADPH + O2 = N(5)-hydroxy-L-ornithine + NADP(+) + H2O. It functions in the pathway siderophore biosynthesis; pyoverdin biosynthesis. In terms of biological role, catalyzes the conversion of L-ornithine to N(5)-hydroxyornithine, the first step in the biosynthesis of all hydroxamate-containing siderophores, such as pyoverdin. Pyoverdin is a hydroxamate siderophore composed of a 6,7-dihydroxyquinoline-containing fluorescent chromophore joined to the N-terminus of a partly cyclic octapeptide (D-Ser-L-Arg-D-Ser-L-N(5)-OH-Orn-L-Lys-L-N(5)-OH-Orn-L-Thr-L-Thr in strain PAO1). Specific for NADPH, which plays a role in stabilization of the C4a-hydroperoxyflavin intermediate. The protein is L-ornithine N(5)-monooxygenase of Pseudomonas aeruginosa (strain ATCC 15692 / DSM 22644 / CIP 104116 / JCM 14847 / LMG 12228 / 1C / PRS 101 / PAO1).